The primary structure comprises 210 residues: Small ribosomal subunit protein uS7 (210 aa).

Positions 1–22 are enriched in acidic residues; that stretch reads MSDEQPAEDETEEAAAESEDTQ. Residues 1 to 23 form a disordered region; it reads MSDEQPAEDETEEAAAESEDTQE.

It belongs to the universal ribosomal protein uS7 family. In terms of assembly, part of the 30S ribosomal subunit. Contacts proteins S9 and S11.

One of the primary rRNA binding proteins, it binds directly to 16S rRNA where it nucleates assembly of the head domain of the 30S subunit. Is located at the subunit interface close to the decoding center. The protein is Small ribosomal subunit protein uS7 of Halobacterium salinarum (strain ATCC 29341 / DSM 671 / R1).